A 428-amino-acid polypeptide reads, in one-letter code: MKICVVGAGYVGLTLSAALASIGHDMICTDKDVKKIGQLKKGVIPFYEPGLSDAILRCGNLSFSSEVKSSMEECPVIFIAVGTPPRSDGSADTKALQSVIGDLSEAIRSYKTIITKSTVPPGTNENIAKQLIASGVSKNLFNIVSNPEFLREGNALYDMLHPDKTVIGVQEEDHVSAAIVKSIYKHIDTPFIVTSLAGAELIKYANNFFLAAKISFINEMARICEAYQSDISDISRAIGLDPRIGKHFLQAGIGYGGSCFPKDLQALQFAAQEKNTETFLLRAVQHINDTQLGLYIKKIQSFFETLQGKKAAVLGISFKPNTDDIRNSQAVRLMERLAELGCDVHAYDPEAVLPEHLRQHVTQHSQAFDAIEESDFLFLATEWSEFLAFDWKKAADIMKGRLVIDGRNVLKKELIEACGLICTGVGRP.

A signal peptide spans 1-23 (MKICVVGAGYVGLTLSAALASIG). Residues 2–19 (KICVVGAGYVGLTLSAAL), valine 11, aspartate 30, lysine 35, threonine 118, and glutamate 152 each bind NAD(+). Substrate contacts are provided by residues 148-152 (EFLRE), lysine 203, asparagine 207, 248-252 (FLQAG), and glycine 256. Residue cysteine 259 is the Nucleophile of the active site. Lysine 262 contributes to the NAD(+) binding site. Lysine 319 provides a ligand contact to substrate. Arginine 326 provides a ligand contact to NAD(+).

Belongs to the UDP-glucose/GDP-mannose dehydrogenase family.

It carries out the reaction UDP-alpha-D-glucose + 2 NAD(+) + H2O = UDP-alpha-D-glucuronate + 2 NADH + 3 H(+). Its pathway is nucleotide-sugar biosynthesis; UDP-alpha-D-glucuronate biosynthesis; UDP-alpha-D-glucuronate from UDP-alpha-D-glucose: step 1/1. Its function is as follows. Catalyzes the conversion of UDP-glucose into UDP-glucuronate, one of the precursors of teichuronic acid. This is Putative UDP-glucose 6-dehydrogenase YtcA (ytcA) from Bacillus subtilis (strain 168).